A 1530-amino-acid chain; its full sequence is Glutamate-rich protein 3 (1530 aa).

Disordered regions lie at residues 165-187 (RLQP…RSRS), 408-429 (SLPK…KAEG), 475-661 (MTSK…PMPI), 673-724 (TEKG…GLEE), 773-870 (EAME…AVGL), 923-1146 (REAA…LLGE), 1167-1334 (LENI…GMGG), 1360-1383 (LAGS…DVAE), and 1425-1530 (YTTE…NVQV). Composition is skewed to basic and acidic residues over residues 415–429 (EKST…KAEG), 531–545 (LDDK…KESE), and 552–562 (PDARDNVKDEN). Positions 563–574 (DGCSESELEEDK) are enriched in acidic residues. A compositionally biased stretch (low complexity) spans 581–592 (SSTSSRSHPYSS). A compositionally biased stretch (basic and acidic residues) spans 600-616 (VGDREAHTDSSTDESAR). Residues 638 to 647 (ESLEIEIEDQ) are compositionally biased toward acidic residues. 2 stretches are compositionally biased toward basic and acidic residues: residues 684-717 (LSEK…DKKA) and 773-787 (EAME…RDAD). Residues 834 to 845 (GIERGAEGAAEA) show a composition bias toward low complexity. Acidic residues predominate over residues 943-958 (GESEEEASIDLEDTGP). Basic and acidic residues-rich tracts occupy residues 979–992 (EPAK…RTET), 1039–1116 (EANR…EETK), and 1173–1212 (LRKE…RQDG). Low complexity predominate over residues 1213–1225 (EGALAAPEAEPAG). The segment covering 1289–1300 (AVDEDPEEEEDK) has biased composition (acidic residues). Basic and acidic residues-rich tracts occupy residues 1464–1487 (GRQE…RELS) and 1502–1511 (DFTETREKQQ). Over residues 1517–1530 (ESETADVSPNNVQV) the composition is skewed to polar residues.

In terms of assembly, interacts with CLTC/clathrin heavy chain 1, AP2A2/AP-2 complex subunit alpha-2, and PIK3C2A/phosphatidylinositol 4-phosphate 3-kinase C2 domain-containing subunit alpha. As to expression, expressed in dopaminergic and serotoninergic neurons.

It is found in the cell projection. It localises to the cilium. The protein resides in the cytoplasm. Its function is as follows. Component of the primary cilium that controls cilium formation and length. May function within retrograde intraflagellar transport (IFT)-associated pathways to remove signaling proteins from primary cilia. Also involved in neuronal vesicle biogenesis and neurotransmitter vesicular function. The chain is Glutamate-rich protein 3 from Homo sapiens (Human).